A 354-amino-acid polypeptide reads, in one-letter code: MIESITSFGAATFGGWWPLIWTLVRAVCIILPLLLCVAYLILWERKLIGWMHVRVGPNRVGPMGLLQPIADVLKLLLKEVMVPSAVSRGMYIIAPLMVLMPAVAIWAVVPFQAEAVVSNINAGLLYVMAISSVGVYGVILAGWASNSKYAFLGAMRASAQMISYEIAMGFALVTVLMVTGSLNLSDIVNSQNRGFFANHGINILSWNWLSLLPMFGVYFISGVAETNRHPFDVVEGESEIVAGHMIEYSGMAFALFFLAEYINMIVISAMTATMFLGGWSAPIDAPVFNWIPGFFWLLIKVFLLLSVFIWLRASFPRYRYDQIMRLGWKIFIPLTVGWLIIVAIWLVSPWNIWK.

A run of 8 helical transmembrane segments spans residues 23–43, 91–111, 124–144, 162–182, 203–223, 250–270, 291–311, and 330–350; these read LVRA…LILW, YIIA…VVPF, LLYV…AGWA, ISYE…TGSL, ILSW…ISGV, GMAF…ISAM, IPGF…FIWL, and IFIP…VSPW.

Belongs to the complex I subunit 1 family. NDH-1 is composed of 14 different subunits. Subunits NuoA, H, J, K, L, M, N constitute the membrane sector of the complex.

Its subcellular location is the cell inner membrane. It carries out the reaction a quinone + NADH + 5 H(+)(in) = a quinol + NAD(+) + 4 H(+)(out). Functionally, NDH-1 shuttles electrons from NADH, via FMN and iron-sulfur (Fe-S) centers, to quinones in the respiratory chain. The immediate electron acceptor for the enzyme in this species is believed to be ubiquinone. Couples the redox reaction to proton translocation (for every two electrons transferred, four hydrogen ions are translocated across the cytoplasmic membrane), and thus conserves the redox energy in a proton gradient. This subunit may bind ubiquinone. The sequence is that of NADH-quinone oxidoreductase subunit H from Ralstonia nicotianae (strain ATCC BAA-1114 / GMI1000) (Ralstonia solanacearum).